Here is a 540-residue protein sequence, read N- to C-terminus: Membrane protein insertase YidC (540 aa).

The helical transmembrane segment at 6–26 threads the bilayer; the sequence is NILLIALALVSFLLFQQWQVA. The segment at 36 to 63 is disordered; that stretch reads QAQSSSTLPAPSFADELDPVPGQQQASA. 4 consecutive transmembrane segments (helical) span residues 342 to 362, 417 to 437, 455 to 475, and 496 to 516; these read AFIQ…TFIV, LGGC…YWAL, LSAQ…MFLI, and PVMF…YWLV.

Belongs to the OXA1/ALB3/YidC family. Type 1 subfamily. In terms of assembly, interacts with the Sec translocase complex via SecD. Specifically interacts with transmembrane segments of nascent integral membrane proteins during membrane integration.

The protein localises to the cell inner membrane. Functionally, required for the insertion and/or proper folding and/or complex formation of integral membrane proteins into the membrane. Involved in integration of membrane proteins that insert both dependently and independently of the Sec translocase complex, as well as at least some lipoproteins. Aids folding of multispanning membrane proteins. This chain is Membrane protein insertase YidC, found in Vibrio campbellii (strain ATCC BAA-1116).